The chain runs to 412 residues: Phosphoribosylamine--glycine ligase (412 aa).

Residues 108–309 (KSIMKKYGVP…LAQAIIDILA (202 aa)) form the ATP-grasp domain. ATP is bound at residue 134-190 (LDEKGVPLVIKADGLAAGKGVTVAFDIETAKSALADIFSGSQGKVVIEEFLDGEEFS). Positions 279 and 281 each coordinate Mg(2+).

It belongs to the GARS family. The cofactor is Mg(2+). Requires Mn(2+) as cofactor.

It carries out the reaction 5-phospho-beta-D-ribosylamine + glycine + ATP = N(1)-(5-phospho-beta-D-ribosyl)glycinamide + ADP + phosphate + H(+). The protein operates within purine metabolism; IMP biosynthesis via de novo pathway; N(1)-(5-phospho-D-ribosyl)glycinamide from 5-phospho-alpha-D-ribose 1-diphosphate: step 2/2. The polypeptide is Phosphoribosylamine--glycine ligase (Lactococcus lactis subsp. lactis (strain IL1403) (Streptococcus lactis)).